The primary structure comprises 184 residues: UPF0149 protein Pmen_0324 (184 aa).

This sequence belongs to the UPF0149 family.

The protein is UPF0149 protein Pmen_0324 of Ectopseudomonas mendocina (strain ymp) (Pseudomonas mendocina).